We begin with the raw amino-acid sequence, 270 residues long: Small ribosomal subunit protein eS1 (270 aa).

Residues 235-270 are disordered; the sequence is GTSKGGAASTAAVAKGEEGVKVDRPEGYEPPVLETV. Residues 239–248 are compositionally biased toward low complexity; that stretch reads GGAASTAAVA. Over residues 249–261 the composition is skewed to basic and acidic residues; it reads KGEEGVKVDRPEG.

Belongs to the eukaryotic ribosomal protein eS1 family. In terms of assembly, component of the small ribosomal subunit. Mature ribosomes consist of a small (40S) and a large (60S) subunit. The 40S subunit contains about 33 different proteins and 1 molecule of RNA (18S). The 60S subunit contains about 49 different proteins and 3 molecules of RNA (28S, 5.8S and 5S).

Its subcellular location is the cytoplasm. The sequence is that of Small ribosomal subunit protein eS1 from Ixodes scapularis (Black-legged tick).